The sequence spans 906 residues: Probable disease resistance RPP8-like protein 2 (906 aa).

The stretch at 15–68 (ELLSRESARLNGIDEQVDGLKRQLGRLQSLLKDADAKKNETERVRNFLEDVKDI) forms a coiled coil. Positions 144–454 (LQERQREIRQ…AEGIITPFHD (311 aa)) constitute an NB-ARC domain. 190 to 197 (GMGGIGKT) contacts ATP. LRR repeat units lie at residues 573–597 (LPLL…SIGD), 598–621 (LIHL…LGNL), 623–644 (LLLC…NVLK), 646–671 (MQEL…DLVN), 672–696 (LESL…KLSV), 704–727 (ECTF…SFHD), 740–766 (LLVL…QYRF), 767–790 (PPHL…ILEK), 791–818 (LLHL…GFPQ), and 840–865 (MPCL…KYVT).

It belongs to the disease resistance NB-LRR family. RPP8/HRT subfamily.

Potential disease resistance protein. The chain is Probable disease resistance RPP8-like protein 2 (RPP8L2) from Arabidopsis thaliana (Mouse-ear cress).